The primary structure comprises 267 residues: Acetyl-coenzyme A carboxylase carboxyl transferase subunit beta, chloroplastic (267 aa).

A CoA carboxyltransferase N-terminal domain is found at 12-267 (LWKKCDSCNI…TIHMILDLHN (256 aa)). Zn(2+)-binding residues include C16, C19, C35, and C38. Residues 16-38 (CDSCNILISKFDFYKHDKVCPEC) form a C4-type zinc finger.

The protein belongs to the AccD/PCCB family. In terms of assembly, acetyl-CoA carboxylase is a heterohexamer composed of biotin carboxyl carrier protein, biotin carboxylase and 2 subunits each of ACCase subunit alpha and ACCase plastid-coded subunit beta (accD). Requires Zn(2+) as cofactor.

It is found in the plastid. Its subcellular location is the chloroplast stroma. It catalyses the reaction N(6)-carboxybiotinyl-L-lysyl-[protein] + acetyl-CoA = N(6)-biotinyl-L-lysyl-[protein] + malonyl-CoA. Its pathway is lipid metabolism; malonyl-CoA biosynthesis; malonyl-CoA from acetyl-CoA: step 1/1. In terms of biological role, component of the acetyl coenzyme A carboxylase (ACC) complex. Biotin carboxylase (BC) catalyzes the carboxylation of biotin on its carrier protein (BCCP) and then the CO(2) group is transferred by the transcarboxylase to acetyl-CoA to form malonyl-CoA. The protein is Acetyl-coenzyme A carboxylase carboxyl transferase subunit beta, chloroplastic of Cyanidium caldarium (Red alga).